Reading from the N-terminus, the 109-residue chain is UPF0060 membrane protein PA3275 (109 aa).

Helical transmembrane passes span 5 to 25 (FWFV…YLWL), 27 to 47 (LGKS…FALL), 59 to 79 (AYAA…AFVE), and 84 to 104 (LWSD…VLFG).

It belongs to the UPF0060 family.

The protein localises to the cell inner membrane. The polypeptide is UPF0060 membrane protein PA3275 (Pseudomonas aeruginosa (strain ATCC 15692 / DSM 22644 / CIP 104116 / JCM 14847 / LMG 12228 / 1C / PRS 101 / PAO1)).